An 82-amino-acid polypeptide reads, in one-letter code: Sodium channel neurotoxin MeuNaTxalpha-3 (82 aa).

Positions 1–8 (LVMAGVES) are cleaved as a signal peptide. Residues 10–80 (RDGHIARNNN…VPIKVPGDCH (71 aa)) enclose the LCN-type CS-alpha/beta domain. Disulfide bonds link Cys20–Cys79, Cys24–Cys52, Cys38–Cys62, and Cys42–Cys64.

Expressed by the venom gland.

Its subcellular location is the secreted. In terms of biological role, alpha toxins bind voltage-independently at site-3 of sodium channels (Nav) and inhibit the inactivation of the activated channels, thereby blocking neuronal transmission. This is Sodium channel neurotoxin MeuNaTxalpha-3 from Mesobuthus eupeus (Lesser Asian scorpion).